The primary structure comprises 262 residues: Small ribosomal subunit protein eS1 (262 aa).

Belongs to the eukaryotic ribosomal protein eS1 family. Component of the small ribosomal subunit. Mature ribosomes consist of a small (40S) and a large (60S) subunit. The 40S subunit contains about 33 different proteins and 1 molecule of RNA (18S). The 60S subunit contains about 49 different proteins and 3 molecules of RNA (25S, 5.8S and 5S).

The protein resides in the cytoplasm. In Cryptosporidium hominis, this protein is Small ribosomal subunit protein eS1.